The primary structure comprises 591 residues: Oxaloacetate decarboxylase alpha chain (591 aa).

Residues 3–263 (IAITDVVLRD…DTGLDILKLE (261 aa)) enclose the Pyruvate carboxyltransferase domain. The Biotinyl-binding domain maps to 518–591 (PAGAGTPVTA…SVGDTLMTLA (74 aa)). Lys557 bears the N6-biotinyllysine mark.

Composed of three chains (alpha, beta, and gamma). Requires biotin as cofactor.

It catalyses the reaction oxaloacetate + 2 Na(+)(in) + H(+) = pyruvate + 2 Na(+)(out) + CO2. Functionally, catalyzes the decarboxylation of oxaloacetate coupled to Na(+) translocation. In Salmonella typhi, this protein is Oxaloacetate decarboxylase alpha chain (oadA1).